Consider the following 609-residue polypeptide: Dihydroxy-acid dehydratase (609 aa).

Asp-81 contributes to the Mg(2+) binding site. Cys-122 lines the [2Fe-2S] cluster pocket. Asp-123 and Lys-124 together coordinate Mg(2+). Position 124 is an N6-carboxylysine (Lys-124). Cys-195 serves as a coordination point for [2Fe-2S] cluster. Residue Glu-491 coordinates Mg(2+). Ser-517 serves as the catalytic Proton acceptor.

The protein belongs to the IlvD/Edd family. In terms of assembly, homodimer. [2Fe-2S] cluster serves as cofactor. Mg(2+) is required as a cofactor.

The catalysed reaction is (2R)-2,3-dihydroxy-3-methylbutanoate = 3-methyl-2-oxobutanoate + H2O. It catalyses the reaction (2R,3R)-2,3-dihydroxy-3-methylpentanoate = (S)-3-methyl-2-oxopentanoate + H2O. It functions in the pathway amino-acid biosynthesis; L-isoleucine biosynthesis; L-isoleucine from 2-oxobutanoate: step 3/4. The protein operates within amino-acid biosynthesis; L-valine biosynthesis; L-valine from pyruvate: step 3/4. Functionally, functions in the biosynthesis of branched-chain amino acids. Catalyzes the dehydration of (2R,3R)-2,3-dihydroxy-3-methylpentanoate (2,3-dihydroxy-3-methylvalerate) into 2-oxo-3-methylpentanoate (2-oxo-3-methylvalerate) and of (2R)-2,3-dihydroxy-3-methylbutanoate (2,3-dihydroxyisovalerate) into 2-oxo-3-methylbutanoate (2-oxoisovalerate), the penultimate precursor to L-isoleucine and L-valine, respectively. The sequence is that of Dihydroxy-acid dehydratase from Acinetobacter baumannii (strain ACICU).